A 179-amino-acid polypeptide reads, in one-letter code: Translation initiation factor IF-3 (179 aa).

Belongs to the IF-3 family. As to quaternary structure, monomer.

Its subcellular location is the cytoplasm. Its function is as follows. IF-3 binds to the 30S ribosomal subunit and shifts the equilibrium between 70S ribosomes and their 50S and 30S subunits in favor of the free subunits, thus enhancing the availability of 30S subunits on which protein synthesis initiation begins. This chain is Translation initiation factor IF-3, found in Lactococcus lactis subsp. lactis (strain IL1403) (Streptococcus lactis).